Consider the following 271-residue polypeptide: Signal recognition particle receptor subunit beta (271 aa).

The helical transmembrane segment at 37–57 threads the bilayer; that stretch reads LLSVVVAVLAVLLTLVFWKLI. Residues 71–79 and 92–95 contribute to the GTP site; these read GLCDSGKTL and TQTS. Position 112 is a phosphoserine (Ser-112). Gly-120 lines the GTP pocket. Phosphothreonine is present on Thr-214. Ala-248 is a GTP binding site.

The protein belongs to the SRP receptor beta subunit family. Heterodimer with SRPRA.

The protein localises to the endoplasmic reticulum membrane. Component of the signal recognition particle (SRP) complex receptor (SR). Ensures, in conjunction with the SRP complex, the correct targeting of the nascent secretory proteins to the endoplasmic reticulum membrane system. May mediate the membrane association of SR. This chain is Signal recognition particle receptor subunit beta (SRPRB), found in Homo sapiens (Human).